The primary structure comprises 448 residues: MRKLRQTGTTIAGGQTLFQSPEEGWQLYTSAQAPDGKCVCTAVIPAQSTCARDGRSRELRQLMEKVQNVSQSMEVLELRTFRDLQYVRSMETLMRSLDARLRAADGSVSAKSFQELKDRMTELLPLSSVLEQYKADTRTIVRLREEVRNLSGNLAAIQEEMGAYGYEDLQQRVMALEARLHACAQKLGCGKLTGVSNPITIRAMGSRFGSWMTDTMAPSADSRVWYMDGYYKGRRVLEFRTLGDFIKGQNFIQHLLPQPWAGTGHVVYNGSLFYNKYQSNVVVKYHFRSRSVLVQRSLPGAGYNNTFPYSWGGFSDMDFMVDESGLWAVYTTNQNAGNIVVSRLDPHTLEVVRSWDTGYPKRSAGEAFMICGVLYVTNSHLAGAKVYFAYFTNTSSYEYTDVPFHNQYSHISMLDYNPRERALYTWNNGHQVLYNVTLFHVISTAGDP.

The signal sequence occupies residues 1-14 (MRKLRQTGTTIAGG). Coiled coils occupy residues 52-79 (RDGRSRELRQLMEKVQNVSQSMEVLELR) and 130-187 (LEQY…AQKL). Residues asparagine 68, asparagine 149, asparagine 269, asparagine 304, asparagine 393, and asparagine 435 are each glycosylated (N-linked (GlcNAc...) asparagine). The Olfactomedin-like domain occupies 188-440 (GCGKLTGVSN…QVLYNVTLFH (253 aa)). Cysteine 189 and cysteine 371 form a disulfide bridge.

Peripherally associated with AMPAR complex. AMPAR complex consists of an inner core made of 4 pore-forming GluA/GRIA proteins (GRIA1, GRIA2, GRIA3 and GRIA4) and 4 major auxiliary subunits arranged in a twofold symmetry. One of the two pairs of distinct binding sites is occupied either by CNIH2, CNIH3 or CACNG2, CACNG3. The other harbors CACNG2, CACNG3, CACNG4, CACNG8 or GSG1L. This inner core of AMPAR complex is complemented by outer core constituents binding directly to the GluA/GRIA proteins at sites distinct from the interaction sites of the inner core constituents. Outer core constituents include at least PRRT1, PRRT2, CKAMP44/SHISA9, FRRS1L and NRN1. The proteins of the inner and outer core serve as a platform for other, more peripherally associated AMPAR constituents, including OLFM2. Alone or in combination, these auxiliary subunits control the gating and pharmacology of the AMPAR complex and profoundly impact their biogenesis and protein processing. Interacts with GRIA2. Interacts with OLFM1 and OLFM3. Interacts with SRF; the interaction promotes dissociation of SRF from the transcriptional repressor HEY2. Interacts with RUNX2. In terms of tissue distribution, expressed in the brain (at protein level). In the developing eye, first detected at 12 dpc in the retinal pigmented epithelium and preferentially expressed in differentiating retinal ganglion cells between 15 and 18 dpc. In the brain, expression is detected mainly in the olfactory bulb, cortex, piriform cortex, olfactory trabeculae, and inferior and superior colliculus. In the adult eye, expression is detected mainly in retinal ganglion cells. Expressed in carotid arteries.

The protein resides in the secreted. Its subcellular location is the synapse. It is found in the membrane. It localises to the nucleus. The protein localises to the cytoplasm. In terms of biological role, involved in transforming growth factor beta (TGF-beta)-induced smooth muscle differentiation. TGF-beta induces expression and nuclear translocation of OLFM2 where it binds to SRF, causing its dissociation from the transcriptional repressor HEY2/HERP1 and facilitating binding of SRF to target genes. Plays a role in AMPAR complex organization. Is a regulator of vascular smooth-muscle cell (SMC) phenotypic switching, that acts by promoting RUNX2 and inhibiting MYOCD binding to SRF. SMC phenotypic switching is the process through which vascular SMCs undergo transition between a quiescent contractile phenotype and a proliferative synthetic phenotype in response to pathological stimuli. SMC phenotypic plasticity is essential for vascular development and remodeling. In Mus musculus (Mouse), this protein is Noelin-2 (Olfm2).